The primary structure comprises 213 residues: Ras-related protein Rab-19 (213 aa).

8 residues coordinate GTP: Ser-24, Val-26, Gly-27, Lys-28, Thr-29, Cys-30, Asp-42, and Thr-47. A Mg(2+)-binding site is contributed by Thr-29. The Switch 1 motif lies at 37 to 52; sequence SGIFMDNQQNTIGVDF. Positions 47 and 70 each coordinate Mg(2+). Positions 72-87 match the Switch 2 motif; that stretch reads AGQERFRTITQSYYRS. 7 residues coordinate GTP: Gly-73, Asn-128, Lys-129, Asp-131, Ser-159, Ala-160, and Lys-161. S-geranylgeranyl cysteine attachment occurs at residues Cys-211 and Cys-213. Residue Cys-213 is modified to Cysteine methyl ester.

The protein belongs to the small GTPase superfamily. Rab family. Mg(2+) is required as a cofactor.

The protein localises to the cell membrane. The catalysed reaction is GTP + H2O = GDP + phosphate + H(+). Regulated by guanine nucleotide exchange factors (GEFs) which promote the exchange of bound GDP for free GTP. Regulated by GTPase activating proteins (GAPs) which increase the GTP hydrolysis activity. Inhibited by GDP dissociation inhibitors (GDIs). The small GTPases Rab are key regulators of intracellular membrane trafficking, from the formation of transport vesicles to their fusion with membranes. Rabs cycle between an inactive GDP-bound form and an active GTP-bound form that is able to recruit to membranes different set of downstream effectors directly responsible for vesicle formation, movement, tethering and fusion. In Xenopus laevis (African clawed frog), this protein is Ras-related protein Rab-19 (rab19).